The sequence spans 208 residues: uncharacterized protein (208 aa).

A run of 6 helical transmembrane segments spans residues 5–25 (VIGI…KEAW), 41–61 (MLLI…IAAL), 69–89 (ANGI…LFFL), 123–143 (VLLG…ICGL), 150–170 (VFFF…TIAG), and 176–196 (NKLL…LVIY).

Its subcellular location is the cell membrane. This is an uncharacterized protein from Bacillus subtilis (strain 168).